The primary structure comprises 453 residues: Glutamyl-tRNA(Gln) amidotransferase subunit A (453 aa).

Active-site charge relay system residues include Lys56 and Ser131. Ser155 acts as the Acyl-ester intermediate in catalysis.

The protein belongs to the amidase family. GatA subfamily. As to quaternary structure, heterotrimer of A, B and C subunits.

The enzyme catalyses L-glutamyl-tRNA(Gln) + L-glutamine + ATP + H2O = L-glutaminyl-tRNA(Gln) + L-glutamate + ADP + phosphate + H(+). Its function is as follows. Allows the formation of correctly charged Gln-tRNA(Gln) through the transamidation of misacylated Glu-tRNA(Gln) in organisms which lack glutaminyl-tRNA synthetase. The reaction takes place in the presence of glutamine and ATP through an activated gamma-phospho-Glu-tRNA(Gln). This is Glutamyl-tRNA(Gln) amidotransferase subunit A from Campylobacter jejuni (strain RM1221).